The following is a 755-amino-acid chain: von Willebrand factor A domain-containing protein 2 (755 aa).

Residues methionine 1 to proline 23 form the signal peptide. A VWFA 1 domain is found at aspartate 51 to leucine 222. N-linked (GlcNAc...) asparagine glycosylation is present at asparagine 147. The EGF-like 1 domain occupies proline 296–alanine 333. Disulfide bonds link cysteine 299-cysteine 310, cysteine 304-cysteine 320, and cysteine 322-cysteine 332. VWFA domains follow at residues aspartate 343–leucine 517 and aspartate 531–leucine 705. Positions proline 712–glutamate 748 constitute an EGF-like 2 domain. 3 disulfides stabilise this stretch: cysteine 716–cysteine 727, cysteine 721–cysteine 736, and cysteine 738–cysteine 747.

In terms of assembly, forms monomers and multimers. A 55 kDa form is produced by proteolytic cleavage. Expression is generally absent in normal colon and other normal body tissues, but it is induced an average of 78-fold in Stage II, III, and IV colon cancers, as well as in colon adenomas and colon cancer cell lines.

The protein resides in the secreted. This is von Willebrand factor A domain-containing protein 2 (VWA2) from Homo sapiens (Human).